The following is a 401-amino-acid chain: UPF0242 protein CCA_01002 (401 aa).

It belongs to the UPF0242 family.

This is UPF0242 protein CCA_01002 from Chlamydia caviae (strain ATCC VR-813 / DSM 19441 / 03DC25 / GPIC) (Chlamydophila caviae).